Consider the following 211-residue polypeptide: Protein DEHYDRATION-INDUCED 19 homolog 7 (211 aa).

The residue at position 113 (T113) is a Phosphothreonine. Positions 163 to 194 (GDSVAQVSPKDTSKSKIQQESFSNEDQEKAKK) are disordered. Polar residues predominate over residues 167-186 (AQVSPKDTSKSKIQQESFSN).

This sequence belongs to the Di19 family. Not phosphorylated in vitro by CPK3 or CPK11. As to expression, expressed in seedlings, roots, leaves, stems, flowers and siliques.

The protein resides in the nucleus. Functionally, involved in both red and blue light signaling. The protein is Protein DEHYDRATION-INDUCED 19 homolog 7 (DI19-7) of Arabidopsis thaliana (Mouse-ear cress).